A 157-amino-acid polypeptide reads, in one-letter code: MAKKDNGPLVAATNRKAYHNYHILDTYEAGIELLGSEVKSIRKKEVSLDGAFVRIEGMQAYVFNMHINPYKYNTVTEVEPLRQRRLLLNKKEINKLKGHAEIKGHTIIPLEVYFKNGWAKIKVGLGKGKQLFDKRDAIKKRDLSREMEKDFKNKIKF.

It belongs to the SmpB family.

Its subcellular location is the cytoplasm. In terms of biological role, required for rescue of stalled ribosomes mediated by trans-translation. Binds to transfer-messenger RNA (tmRNA), required for stable association of tmRNA with ribosomes. tmRNA and SmpB together mimic tRNA shape, replacing the anticodon stem-loop with SmpB. tmRNA is encoded by the ssrA gene; the 2 termini fold to resemble tRNA(Ala) and it encodes a 'tag peptide', a short internal open reading frame. During trans-translation Ala-aminoacylated tmRNA acts like a tRNA, entering the A-site of stalled ribosomes, displacing the stalled mRNA. The ribosome then switches to translate the ORF on the tmRNA; the nascent peptide is terminated with the 'tag peptide' encoded by the tmRNA and targeted for degradation. The ribosome is freed to recommence translation, which seems to be the essential function of trans-translation. This Elusimicrobium minutum (strain Pei191) protein is SsrA-binding protein.